An 872-amino-acid chain; its full sequence is Alanine--tRNA ligase (872 aa).

Positions 563, 567, 665, and 669 each coordinate Zn(2+).

It belongs to the class-II aminoacyl-tRNA synthetase family. Zn(2+) serves as cofactor.

It localises to the cytoplasm. It catalyses the reaction tRNA(Ala) + L-alanine + ATP = L-alanyl-tRNA(Ala) + AMP + diphosphate. Functionally, catalyzes the attachment of alanine to tRNA(Ala) in a two-step reaction: alanine is first activated by ATP to form Ala-AMP and then transferred to the acceptor end of tRNA(Ala). Also edits incorrectly charged Ser-tRNA(Ala) and Gly-tRNA(Ala) via its editing domain. The polypeptide is Alanine--tRNA ligase (Bacteroides thetaiotaomicron (strain ATCC 29148 / DSM 2079 / JCM 5827 / CCUG 10774 / NCTC 10582 / VPI-5482 / E50)).